Reading from the N-terminus, the 171-residue chain is Neuronal vesicle trafficking-associated protein 2 (171 aa).

The interval 1–21 is disordered; the sequence is MVKLNSNPGEKGAKPPSVEDG. The Cytoplasmic segment spans residues 1–71; the sequence is MVKLNSNPGE…FRVPKIAEFT (71 aa). A helical; Signal-anchor for type II membrane protein transmembrane segment spans residues 72-92; that stretch reads VTILVSLALAFLACIVFLVVY. At 93 to 171 the chain is on the lumenal side; that stretch reads KAFTYDHSCP…EPKPPKTQGH (79 aa).

It belongs to the NSG family. As to expression, specifically expressed in neural and neuroendocrine tissues. Pituitary and less in adrenal gland and testis. Expressed in the hippocampus throughout development. Remains enriched in layer V cortical neurons during development. At P0, broadly expressed in the neocortex. Is down-regulated overall at P8 and P14, but remains relatively enriched in layer V. At P0 is lower expressed in the cerebellum. Expression remains low throughout development, and is undetectable by adulthood.

The protein resides in the membrane. Its subcellular location is the golgi apparatus. It is found in the trans-Golgi network membrane. The protein localises to the cell projection. It localises to the dendrite. The protein resides in the endosome membrane. Its subcellular location is the early endosome membrane. It is found in the late endosome membrane. The protein localises to the lysosome lumen. It localises to the cytoplasmic vesicle membrane. The protein resides in the golgi stack membrane. Its subcellular location is the endosome. It is found in the multivesicular body membrane. The chain is Neuronal vesicle trafficking-associated protein 2 from Mus musculus (Mouse).